Here is a 476-residue protein sequence, read N- to C-terminus: 3-isopropylmalate dehydratase large subunit (476 aa).

Residues C353, C413, and C416 each coordinate [4Fe-4S] cluster.

This sequence belongs to the aconitase/IPM isomerase family. LeuC type 1 subfamily. In terms of assembly, heterodimer of LeuC and LeuD. The cofactor is [4Fe-4S] cluster.

It catalyses the reaction (2R,3S)-3-isopropylmalate = (2S)-2-isopropylmalate. The protein operates within amino-acid biosynthesis; L-leucine biosynthesis; L-leucine from 3-methyl-2-oxobutanoate: step 2/4. In terms of biological role, catalyzes the isomerization between 2-isopropylmalate and 3-isopropylmalate, via the formation of 2-isopropylmaleate. The sequence is that of 3-isopropylmalate dehydratase large subunit from Yersinia pseudotuberculosis serotype IB (strain PB1/+).